We begin with the raw amino-acid sequence, 223 residues long: Lipoprotein-releasing system ATP-binding protein LolD (223 aa).

One can recognise an ABC transporter domain in the interval 2–223; it reads IQVRNLKKTF…LRDGEIVTCA (222 aa). 38–45 is a binding site for ATP; that stretch reads GVSGAGKT.

The protein belongs to the ABC transporter superfamily. Lipoprotein translocase (TC 3.A.1.125) family. As to quaternary structure, the complex is composed of two ATP-binding proteins (LolD) and two transmembrane proteins (LolC and LolE).

The protein localises to the cell inner membrane. Its function is as follows. Part of the ABC transporter complex LolCDE involved in the translocation of mature outer membrane-directed lipoproteins, from the inner membrane to the periplasmic chaperone, LolA. Responsible for the formation of the LolA-lipoprotein complex in an ATP-dependent manner. This Syntrophus aciditrophicus (strain SB) protein is Lipoprotein-releasing system ATP-binding protein LolD.